Here is a 784-residue protein sequence, read N- to C-terminus: Cas scaffolding protein family member 4 (784 aa).

The SH3 domain maps to 11–73 (PKALLARALY…PANRLQILEE (63 aa)). Phosphoserine is present on residues Ser197, Ser246, Ser302, Ser373, and Ser387. The segment at 343 to 376 (TPNIYDVPRAMPDVPQAGKELGKAGGPSENSVDH) is disordered. Positions 466 to 536 (RDSLEANIDA…LLETKERLES (71 aa)) form a coiled coil. The interval 614–635 (KEGESYQRKAPFQKQRASEQPP) is disordered.

This sequence belongs to the CAS family. As to quaternary structure, interacts (via SH3 domain) with PTK2/FAK1 (via C-terminus). Phosphorylated on tyrosines by SRC.

It is found in the cytoplasm. It localises to the cytoskeleton. The protein localises to the cell junction. The protein resides in the focal adhesion. Functionally, docking protein that plays a role in tyrosine kinase-based signaling related to cell adhesion and cell spreading. Regulates PTK2/FAK1 activity, focal adhesion integrity, and cell spreading. In Sus scrofa (Pig), this protein is Cas scaffolding protein family member 4.